Consider the following 187-residue polypeptide: Threonylcarbamoyl-AMP synthase (187 aa).

Positions 4 to 187 (QSTIAAAITC…DAMNGKVFRG (184 aa)) constitute a YrdC-like domain.

The protein belongs to the SUA5 family. TsaC subfamily.

It localises to the cytoplasm. The catalysed reaction is L-threonine + hydrogencarbonate + ATP = L-threonylcarbamoyladenylate + diphosphate + H2O. Functionally, required for the formation of a threonylcarbamoyl group on adenosine at position 37 (t(6)A37) in tRNAs that read codons beginning with adenine. Catalyzes the conversion of L-threonine, HCO(3)(-)/CO(2) and ATP to give threonylcarbamoyl-AMP (TC-AMP) as the acyladenylate intermediate, with the release of diphosphate. This is Threonylcarbamoyl-AMP synthase from Pseudoalteromonas translucida (strain TAC 125).